The following is a 960-amino-acid chain: UPF0182 protein DSY1630 (960 aa).

Transmembrane regions (helical) follow at residues 7 to 27 (IMLV…GLFE), 50 to 70 (IIQI…LFSI), 105 to 125 (TLWL…VTGF), 169 to 189 (FGPL…AGVI), 212 to 232 (LALL…FDTF), 256 to 276 (ALKA…LAFF), and 285 to 305 (LPIL…PMVL). Disordered stretches follow at residues 866–899 (SALA…QEDT) and 924–960 (TGDS…KTNP). The segment covering 881–897 (ETEETTEETEEPVDPQE) has biased composition (acidic residues). A compositionally biased stretch (basic and acidic residues) spans 931–944 (EGGKKADEDAHDVQ). Positions 950 to 960 (SVSSEQSKTNP) are enriched in polar residues.

The protein belongs to the UPF0182 family.

Its subcellular location is the cell membrane. This Desulfitobacterium hafniense (strain Y51) protein is UPF0182 protein DSY1630.